A 37-amino-acid chain; its full sequence is Large ribosomal subunit protein bL36 (37 aa).

This sequence belongs to the bacterial ribosomal protein bL36 family.

This Caldicellulosiruptor saccharolyticus (strain ATCC 43494 / DSM 8903 / Tp8T 6331) protein is Large ribosomal subunit protein bL36.